Reading from the N-terminus, the 81-residue chain is Photosystem I iron-sulfur center (81 aa).

4Fe-4S ferredoxin-type domains are found at residues 2-31 and 39-68; these read SHSVKIYDTCIGCTQCVRACPLDVLEMVPW and IAASPRTEDCVGCKRCETACPTDFLSIRVY. [4Fe-4S] cluster-binding residues include C11, C14, C17, C21, C48, C51, C54, and C58.

The cyanobacterial PSI reaction center is composed of one copy each of PsaA,B,C,D,E,F,I,J,K,L,M and X, and forms trimeric complexes. It depends on [4Fe-4S] cluster as a cofactor.

The protein resides in the cellular thylakoid membrane. It carries out the reaction reduced [plastocyanin] + hnu + oxidized [2Fe-2S]-[ferredoxin] = oxidized [plastocyanin] + reduced [2Fe-2S]-[ferredoxin]. Apoprotein for the two 4Fe-4S centers FA and FB of photosystem I (PSI); essential for photochemical activity. FB is the terminal electron acceptor of PSI, donating electrons to ferredoxin. The C-terminus interacts with PsaA/B/D and helps assemble the protein into the PSI complex. Required for binding of PsaD and PsaE to PSI. PSI is a plastocyanin/cytochrome c6-ferredoxin oxidoreductase, converting photonic excitation into a charge separation, which transfers an electron from the donor P700 chlorophyll pair to the spectroscopically characterized acceptors A0, A1, FX, FA and FB in turn. This Synechococcus elongatus (strain ATCC 33912 / PCC 7942 / FACHB-805) (Anacystis nidulans R2) protein is Photosystem I iron-sulfur center.